The following is a 152-amino-acid chain: 3-dehydroquinate dehydratase (152 aa).

Tyrosine 26 acts as the Proton acceptor in catalysis. Asparagine 77, histidine 83, and aspartate 90 together coordinate substrate. The active-site Proton donor is histidine 103. Residues leucine 104–serine 105 and arginine 114 contribute to the substrate site.

The protein belongs to the type-II 3-dehydroquinase family. As to quaternary structure, homododecamer.

The catalysed reaction is 3-dehydroquinate = 3-dehydroshikimate + H2O. It functions in the pathway metabolic intermediate biosynthesis; chorismate biosynthesis; chorismate from D-erythrose 4-phosphate and phosphoenolpyruvate: step 3/7. Catalyzes a trans-dehydration via an enolate intermediate. The chain is 3-dehydroquinate dehydratase (aroQ) from Synechocystis sp. (strain ATCC 27184 / PCC 6803 / Kazusa).